Reading from the N-terminus, the 134-residue chain is 15.4 kDa class V heat shock protein (134 aa).

Positions 19–126 (SLNNYQENHV…LIDPSDVPES (108 aa)) constitute a sHSP domain.

Belongs to the small heat shock protein (HSP20) family. As to quaternary structure, may form oligomeric structures.

It is found in the cytoplasm. This is 15.4 kDa class V heat shock protein (HSP15.4) from Arabidopsis thaliana (Mouse-ear cress).